Consider the following 336-residue polypeptide: Dihydroorotate dehydrogenase (quinone) (336 aa).

Residues Ala62–Lys66 and Thr86 each bind FMN. Lys66 lines the substrate pocket. Asn111–Phe115 lines the substrate pocket. 2 residues coordinate FMN: Asn139 and Asn172. Asn172 lines the substrate pocket. The Nucleophile role is filled by Ser175. Asn177 serves as a coordination point for substrate. Lys217 and Thr245 together coordinate FMN. A substrate-binding site is contributed by Asn246–Thr247. Residues Gly268, Gly297, and Tyr318–Ser319 contribute to the FMN site.

It belongs to the dihydroorotate dehydrogenase family. Type 2 subfamily. Monomer. Requires FMN as cofactor.

Its subcellular location is the cell membrane. The catalysed reaction is (S)-dihydroorotate + a quinone = orotate + a quinol. The protein operates within pyrimidine metabolism; UMP biosynthesis via de novo pathway; orotate from (S)-dihydroorotate (quinone route): step 1/1. Catalyzes the conversion of dihydroorotate to orotate with quinone as electron acceptor. This is Dihydroorotate dehydrogenase (quinone) from Salmonella gallinarum (strain 287/91 / NCTC 13346).